The chain runs to 216 residues: Imidazole glycerol phosphate synthase subunit HisH (216 aa).

Positions 2–216 constitute a Glutamine amidotransferase type-1 domain; sequence RVAIIDYGSG…LISNFLRWKP (215 aa). The active-site Nucleophile is the Cys88. Active-site residues include His196 and Glu198.

Heterodimer of HisH and HisF.

Its subcellular location is the cytoplasm. The catalysed reaction is 5-[(5-phospho-1-deoxy-D-ribulos-1-ylimino)methylamino]-1-(5-phospho-beta-D-ribosyl)imidazole-4-carboxamide + L-glutamine = D-erythro-1-(imidazol-4-yl)glycerol 3-phosphate + 5-amino-1-(5-phospho-beta-D-ribosyl)imidazole-4-carboxamide + L-glutamate + H(+). The enzyme catalyses L-glutamine + H2O = L-glutamate + NH4(+). Its pathway is amino-acid biosynthesis; L-histidine biosynthesis; L-histidine from 5-phospho-alpha-D-ribose 1-diphosphate: step 5/9. IGPS catalyzes the conversion of PRFAR and glutamine to IGP, AICAR and glutamate. The HisH subunit catalyzes the hydrolysis of glutamine to glutamate and ammonia as part of the synthesis of IGP and AICAR. The resulting ammonia molecule is channeled to the active site of HisF. This chain is Imidazole glycerol phosphate synthase subunit HisH, found in Agrobacterium fabrum (strain C58 / ATCC 33970) (Agrobacterium tumefaciens (strain C58)).